The chain runs to 314 residues: Cathepsin L 1 (314 aa).

The first 24 residues, 1–24 (MMLLGASLYLNNTQEVSDEIDTAN), serve as a signal peptide directing secretion. The propeptide at 25–109 (LYANWKMKYN…NAANSNFQYK (85 aa)) is activation peptide. Disulfide bonds link Cys132–Cys175, Cys166–Cys207, and Cys259–Cys302. Cys135 is a catalytic residue. Active-site residues include His265 and Asn282.

It belongs to the peptidase C1 family.

Its subcellular location is the secreted. It catalyses the reaction Specificity close to that of papain. As compared to cathepsin B, cathepsin L exhibits higher activity toward protein substrates, but has little activity on Z-Arg-Arg-NHMec, and no peptidyl-dipeptidase activity.. Functionally, may be involved in extracellular digestion. This Paramecium tetraurelia protein is Cathepsin L 1.